The chain runs to 677 residues: Probable serine/threonine-protein kinase mkcF (677 aa).

In terms of domain architecture, SH3 spans 1–58 (MLYLVATGDYKGPSENHLSFTKGQRIEFLERTENGFIKGKLDGKVGIFPSSLITIETR). The disordered stretch occupies residues 72-244 (TETKDDTGSI…SSSSSSTKRR (173 aa)). Over residues 79–94 (GSISSSTSTSTSSLTT) the composition is skewed to low complexity. Residues 105-126 (GEQQPSTSTINGQSSSTSPILQ) are compositionally biased toward polar residues. Over residues 127-146 (SNGTTNTTTSSTSNNNIGDN) the composition is skewed to low complexity. Residues 158 to 174 (TTSNHSKSASRLSVASF) are compositionally biased toward polar residues. Residues 175 to 192 (STTTTATTTTTTTTTATS) are compositionally biased toward low complexity. Residues 209–224 (DKKSKDDDKSEKEGLY) show a composition bias toward basic and acidic residues. The segment covering 230 to 240 (SSSSSSSSSSS) has biased composition (low complexity). The Protein kinase domain occupies 401-646 (IKFTHMVGRG…VDKLMRHPFF (246 aa)). ATP is bound by residues 407–415 (VGRGQYGKV) and Lys-428. The Proton acceptor role is filled by Asp-519.

This sequence belongs to the protein kinase superfamily. Ser/Thr protein kinase family. STE20 subfamily. It depends on Mg(2+) as a cofactor.

The enzyme catalyses L-seryl-[protein] + ATP = O-phospho-L-seryl-[protein] + ADP + H(+). It carries out the reaction L-threonyl-[protein] + ATP = O-phospho-L-threonyl-[protein] + ADP + H(+). The protein is Probable serine/threonine-protein kinase mkcF of Dictyostelium discoideum (Social amoeba).